Reading from the N-terminus, the 253-residue chain is Proteasome subunit alpha (253 aa).

Low complexity predominate over residues 232–242 (AAGASTAGEAG). Residues 232–253 (AAGASTAGEAGSAEDEGSDDEK) form a disordered region. The span at 243 to 253 (SAEDEGSDDEK) shows a compositional bias: acidic residues.

The protein belongs to the peptidase T1A family. As to quaternary structure, the 20S proteasome core is composed of 14 alpha and 14 beta subunits that assemble into four stacked heptameric rings, resulting in a barrel-shaped structure. The two inner rings, each composed of seven catalytic beta subunits, are sandwiched by two outer rings, each composed of seven alpha subunits. The catalytic chamber with the active sites is on the inside of the barrel. Has a gated structure, the ends of the cylinder being occluded by the N-termini of the alpha-subunits. Is capped by the proteasome-associated ATPase, ARC.

It is found in the cytoplasm. It participates in protein degradation; proteasomal Pup-dependent pathway. With respect to regulation, the formation of the proteasomal ATPase ARC-20S proteasome complex, likely via the docking of the C-termini of ARC into the intersubunit pockets in the alpha-rings, may trigger opening of the gate for substrate entry. Interconversion between the open-gate and close-gate conformations leads to a dynamic regulation of the 20S proteasome proteolysis activity. Its function is as follows. Component of the proteasome core, a large protease complex with broad specificity involved in protein degradation. In Streptomyces avermitilis (strain ATCC 31267 / DSM 46492 / JCM 5070 / NBRC 14893 / NCIMB 12804 / NRRL 8165 / MA-4680), this protein is Proteasome subunit alpha.